A 61-amino-acid polypeptide reads, in one-letter code: Large ribosomal subunit protein uL30 (61 aa).

Belongs to the universal ribosomal protein uL30 family. As to quaternary structure, part of the 50S ribosomal subunit.

This Corynebacterium efficiens (strain DSM 44549 / YS-314 / AJ 12310 / JCM 11189 / NBRC 100395) protein is Large ribosomal subunit protein uL30.